The following is a 234-amino-acid chain: Coiled-coil domain-containing protein 194 (234 aa).

Positions 1–43 (MAEPGPEPGRAWRLLALCGAAVFLAAAAAGGALVAWNLAASTA) are cleaved as a signal peptide. A disordered region spans residues 44–63 (RSPRCPEPEQMNATVRPPDS). A coiled-coil region spans residues 67–171 (VEELRRRLAE…LQRAGAAEAA (105 aa)). Residues 194–234 (GTLRKESRLRPRSGSRTKPSISHRPKSGSTKGCRRPPRDPQ) are disordered. The span at 203 to 219 (RPRSGSRTKPSISHRPK) shows a compositional bias: basic residues.

This Mus musculus (Mouse) protein is Coiled-coil domain-containing protein 194.